The sequence spans 727 residues: MQNQLTIKEIALELGISREEFDLIEEKLGRIPNEFETYLFSAQWSEHCGYKHSKHYLKKINESYESENAGYVQIGGKAVVFKVESHNHPSAVEPYQGAATGIGGIVRDILAMGARPIALLDSLKFGNVFDPKVKNIFEGVVSGISDYGNSIGVPTVGGETSFNEIYSTNPLINVMCVGVANKNHLASSHADGPDKLLVYVGSKTGRDGIHGASFASKKLSGKDDRPSVQVGDPFTEKNLIEATLEILKIKGVRACQDMGAAGVLSSTSEMAYKGGVGCELYLDNIPKRQEDIEPWEIMLSESQERMLFLVNPGTEKKVEAICNKYLIDFAVIGKTISTPHYVVKENSEGKVLADLPIDILVNAPEYYRNNTIPSTYILNKAKKYPKTKIKDIDKILKILLSNHNISSKKWIYQQYDYKVETNTIFIPEQADSAVLWLKKTQKAIAVTIDSNELYTYLDPFEGTKNVVYEAARNLISVGAKPLAITDNLNFGDPDDPEVSWQFEKSIEGLIEASKELSTPVVSGNVSFYNSYHETSIFPTPVIGMIGEIKDIKKIVNLKFKDCGDVVYLIGKTDINVDKIGGSFYLKVLEGFVGGEIDFVNPMYERYLQNFILDLIDKGILKSVHDVSKGGLLTALAVSCILSNRGFKGILDASIEELFGENQGRFIVSVRSKDSRIFEDIAKSSNINVKKLGEIKSSDDGIDICSAYFDLKELKSIYFDSISKSVEE.

His47 is an active-site residue. ATP contacts are provided by Tyr50 and Lys82. Glu84 is a binding site for Mg(2+). Substrate contacts are provided by residues 85 to 88 (SHNH) and Arg107. Catalysis depends on His86, which acts as the Proton acceptor. Asp108 is a Mg(2+) binding site. Position 229 (Gln229) interacts with substrate. A Mg(2+)-binding site is contributed by Asp257. 301-303 (ESQ) contacts substrate. The ATP site is built by Asp486 and Gly523. Asn524 provides a ligand contact to Mg(2+). Ser526 is a binding site for substrate.

It belongs to the FGAMS family. In terms of assembly, monomer. Part of the FGAM synthase complex composed of 1 PurL, 1 PurQ and 2 PurS subunits.

Its subcellular location is the cytoplasm. The catalysed reaction is N(2)-formyl-N(1)-(5-phospho-beta-D-ribosyl)glycinamide + L-glutamine + ATP + H2O = 2-formamido-N(1)-(5-O-phospho-beta-D-ribosyl)acetamidine + L-glutamate + ADP + phosphate + H(+). The protein operates within purine metabolism; IMP biosynthesis via de novo pathway; 5-amino-1-(5-phospho-D-ribosyl)imidazole from N(2)-formyl-N(1)-(5-phospho-D-ribosyl)glycinamide: step 1/2. Part of the phosphoribosylformylglycinamidine synthase complex involved in the purines biosynthetic pathway. Catalyzes the ATP-dependent conversion of formylglycinamide ribonucleotide (FGAR) and glutamine to yield formylglycinamidine ribonucleotide (FGAM) and glutamate. The FGAM synthase complex is composed of three subunits. PurQ produces an ammonia molecule by converting glutamine to glutamate. PurL transfers the ammonia molecule to FGAR to form FGAM in an ATP-dependent manner. PurS interacts with PurQ and PurL and is thought to assist in the transfer of the ammonia molecule from PurQ to PurL. The chain is Phosphoribosylformylglycinamidine synthase subunit PurL from Petrotoga mobilis (strain DSM 10674 / SJ95).